The primary structure comprises 304 residues: Energy-coupling factor transporter ATP-binding protein EcfA2 (304 aa).

Positions 11–260 (LKADEILAVS…QTFLEKTTIV (250 aa)) constitute an ABC transporter domain. 54 to 61 (GDSGSGKS) contacts ATP.

The protein belongs to the ABC transporter superfamily. Energy-coupling factor EcfA family. Forms a stable energy-coupling factor (ECF) transporter complex composed of 2 membrane-embedded substrate-binding proteins (S component), 2 ATP-binding proteins (A component) and 2 transmembrane proteins (T component).

Its subcellular location is the cell membrane. Functionally, ATP-binding (A) component of a common energy-coupling factor (ECF) ABC-transporter complex. Unlike classic ABC transporters this ECF transporter provides the energy necessary to transport a number of different substrates. This Mycoplasma genitalium (strain ATCC 33530 / DSM 19775 / NCTC 10195 / G37) (Mycoplasmoides genitalium) protein is Energy-coupling factor transporter ATP-binding protein EcfA2.